Reading from the N-terminus, the 65-residue chain is UPF0434 protein Mmwyl1_2153 (65 aa).

It belongs to the UPF0434 family.

The chain is UPF0434 protein Mmwyl1_2153 from Marinomonas sp. (strain MWYL1).